A 356-amino-acid polypeptide reads, in one-letter code: Glycerophosphodiester phosphodiesterase (356 aa).

The first 20 residues, 1–20, serve as a signal peptide directing secretion; the sequence is MRGTYCVTLWGGVFAALVAG. C21 carries N-palmitoyl cysteine lipidation. The S-diacylglycerol cysteine moiety is linked to residue C21. In terms of domain architecture, GP-PDE spans 25–314; the sequence is RMIVAYRGAA…CHVHTVRKET (290 aa).

The protein belongs to the glycerophosphoryl diester phosphodiesterase family. Post-translationally, palmitoylated upon expression of a fusion protein with first 40 residues fused to PhoA in E.coli.

The protein localises to the cell inner membrane. The catalysed reaction is a sn-glycero-3-phosphodiester + H2O = an alcohol + sn-glycerol 3-phosphate + H(+). Functionally, glycerophosphoryl diester phosphodiesterase hydrolyzes deacylated phospholipids to G3P and the corresponding alcohols. Binds human IgA, IgD and the Fc portion of IgG but not IgM, which may contribute to evasion of the human immune system. In Treponema pallidum (strain Nichols), this protein is Glycerophosphodiester phosphodiesterase (glpQ).